The chain runs to 436 residues: Adenosylhomocysteinase (436 aa).

Substrate contacts are provided by Thr62, Asp136, and Glu161. 162-164 (TTT) provides a ligand contact to NAD(+). Positions 191 and 195 each coordinate substrate. NAD(+) contacts are provided by residues Asn196, 225–230 (GFGDVG), Glu248, Asn283, 304–306 (IGH), and Asn352.

Belongs to the adenosylhomocysteinase family. The cofactor is NAD(+).

The protein localises to the cytoplasm. It catalyses the reaction S-adenosyl-L-homocysteine + H2O = L-homocysteine + adenosine. It participates in amino-acid biosynthesis; L-homocysteine biosynthesis; L-homocysteine from S-adenosyl-L-homocysteine: step 1/1. Its function is as follows. May play a key role in the regulation of the intracellular concentration of adenosylhomocysteine. This is Adenosylhomocysteinase from Leptospira borgpetersenii serovar Hardjo-bovis (strain JB197).